Consider the following 749-residue polypeptide: EF-hand domain-containing family member C2 (749 aa).

3 consecutive DM10 domains span residues 75-182, 226-368, and 431-538; these read DKQV…RKIG, HGKI…KSKY, and KSNI…EQNT. In terms of domain architecture, EF-hand spans 558 to 593; sequence GKSRELKQVFKAADSKHTNMVDYNTFRDILMSLTVG.

As to quaternary structure, microtubule inner protein component of sperm flagellar doublet microtubules. In terms of tissue distribution, expressed in airway epithelial cells.

The protein resides in the cytoplasm. Its subcellular location is the cytoskeleton. The protein localises to the cilium axoneme. It localises to the flagellum axoneme. Its function is as follows. Microtubule inner protein (MIP) part of the dynein-decorated doublet microtubules (DMTs) in cilia axoneme, which is required for motile cilia beating. The polypeptide is EF-hand domain-containing family member C2 (Homo sapiens (Human)).